A 412-amino-acid polypeptide reads, in one-letter code: Protein arginine N-methyltransferase 2 (412 aa).

Residues 48–65 (EKNRNGDKEFRESTDDNK) are compositionally biased toward basic and acidic residues. Disordered regions lie at residues 48 to 69 (EKNRNGDKEFRESTDDNKTSNT) and 169 to 189 (SVQTAVDGQKEESVGSDDDAT). Residues serine 181 and serine 184 each carry the phosphoserine modification. The region spanning 189–412 (TAANQQVYLK…YYYHPRITFA (224 aa)) is the RMT2 domain. S-adenosyl-L-methionine contacts are provided by residues tyrosine 196, methionine 226, 250-255 (FGMGII), 271-273 (EAH), 298-299 (WQ), and aspartate 319.

This sequence belongs to the class I-like SAM-binding methyltransferase superfamily. RMT2 methyltransferase family. Monomer. Interacts with nucleoporins NUP49, NUP57 and NUP100.

Its subcellular location is the cytoplasm. The protein resides in the nucleus. In terms of biological role, S-adenosyl-L-methionine-dependent protein-arginine N-methyltransferase that methylates the delta-nitrogen atom of arginine residues to form N5-methylarginine (type IV) in target proteins. Monomethylates ribosomal protein L12 (RPL12A/RPL12B) at 'Arg-67'. This Saccharomyces cerevisiae (strain ATCC 204508 / S288c) (Baker's yeast) protein is Protein arginine N-methyltransferase 2.